Reading from the N-terminus, the 900-residue chain is Isoleucine--tRNA ligase (900 aa).

The short motif at 59–69 (PYANGNIHMGH) is the 'HIGH' region element. E550 is a binding site for L-isoleucyl-5'-AMP. The 'KMSKS' region signature appears at 591–595 (KMSKS). K594 provides a ligand contact to ATP. Zn(2+)-binding residues include C876, C879, C892, and C895.

Belongs to the class-I aminoacyl-tRNA synthetase family. IleS type 1 subfamily. Monomer. The cofactor is Zn(2+).

The protein localises to the cytoplasm. The catalysed reaction is tRNA(Ile) + L-isoleucine + ATP = L-isoleucyl-tRNA(Ile) + AMP + diphosphate. In terms of biological role, catalyzes the attachment of isoleucine to tRNA(Ile). As IleRS can inadvertently accommodate and process structurally similar amino acids such as valine, to avoid such errors it has two additional distinct tRNA(Ile)-dependent editing activities. One activity is designated as 'pretransfer' editing and involves the hydrolysis of activated Val-AMP. The other activity is designated 'posttransfer' editing and involves deacylation of mischarged Val-tRNA(Ile). The chain is Isoleucine--tRNA ligase from Onion yellows phytoplasma (strain OY-M).